Here is a 281-residue protein sequence, read N- to C-terminus: Pantothenate synthetase (281 aa).

30–37 (MGALHRGH) lines the ATP pocket. Residue histidine 37 is the Proton donor of the active site. Glutamine 61 is a (R)-pantoate binding site. Glutamine 61 provides a ligand contact to beta-alanine. An ATP-binding site is contributed by 147–150 (GEKD). Glutamine 153 lines the (R)-pantoate pocket. Residues isoleucine 176 and 184–187 (LSSR) each bind ATP.

It belongs to the pantothenate synthetase family. Homodimer.

It localises to the cytoplasm. It carries out the reaction (R)-pantoate + beta-alanine + ATP = (R)-pantothenate + AMP + diphosphate + H(+). The protein operates within cofactor biosynthesis; (R)-pantothenate biosynthesis; (R)-pantothenate from (R)-pantoate and beta-alanine: step 1/1. Its function is as follows. Catalyzes the condensation of pantoate with beta-alanine in an ATP-dependent reaction via a pantoyl-adenylate intermediate. The sequence is that of Pantothenate synthetase from Porphyromonas gingivalis (strain ATCC 33277 / DSM 20709 / CIP 103683 / JCM 12257 / NCTC 11834 / 2561).